Here is a 390-residue protein sequence, read N- to C-terminus: Anhydro-N-acetylmuramic acid kinase (390 aa).

9-16 serves as a coordination point for ATP; sequence GTSLDGID.

Belongs to the anhydro-N-acetylmuramic acid kinase family.

It carries out the reaction 1,6-anhydro-N-acetyl-beta-muramate + ATP + H2O = N-acetyl-D-muramate 6-phosphate + ADP + H(+). The protein operates within amino-sugar metabolism; 1,6-anhydro-N-acetylmuramate degradation. Its pathway is cell wall biogenesis; peptidoglycan recycling. In terms of biological role, catalyzes the specific phosphorylation of 1,6-anhydro-N-acetylmuramic acid (anhMurNAc) with the simultaneous cleavage of the 1,6-anhydro ring, generating MurNAc-6-P. Is required for the utilization of anhMurNAc either imported from the medium or derived from its own cell wall murein, and thus plays a role in cell wall recycling. The sequence is that of Anhydro-N-acetylmuramic acid kinase from Bacillus cereus (strain B4264).